The primary structure comprises 115 residues: Large ribosomal subunit protein bL19 (115 aa).

Belongs to the bacterial ribosomal protein bL19 family.

Functionally, this protein is located at the 30S-50S ribosomal subunit interface and may play a role in the structure and function of the aminoacyl-tRNA binding site. This is Large ribosomal subunit protein bL19 from Pectobacterium atrosepticum (strain SCRI 1043 / ATCC BAA-672) (Erwinia carotovora subsp. atroseptica).